The sequence spans 298 residues: UDP-N-acetylenolpyruvoylglucosamine reductase (298 aa).

One can recognise an FAD-binding PCMH-type domain in the interval T27–E191. Residue R170 is part of the active site. The active-site Proton donor is S220. E290 is an active-site residue.

It belongs to the MurB family. FAD serves as cofactor.

It is found in the cytoplasm. The enzyme catalyses UDP-N-acetyl-alpha-D-muramate + NADP(+) = UDP-N-acetyl-3-O-(1-carboxyvinyl)-alpha-D-glucosamine + NADPH + H(+). It participates in cell wall biogenesis; peptidoglycan biosynthesis. Its function is as follows. Cell wall formation. In Listeria innocua serovar 6a (strain ATCC BAA-680 / CLIP 11262), this protein is UDP-N-acetylenolpyruvoylglucosamine reductase.